The sequence spans 865 residues: Alanine--tRNA ligase (865 aa).

Residues His-556, His-560, Cys-660, and His-664 each coordinate Zn(2+).

It belongs to the class-II aminoacyl-tRNA synthetase family. The cofactor is Zn(2+).

It is found in the cytoplasm. The enzyme catalyses tRNA(Ala) + L-alanine + ATP = L-alanyl-tRNA(Ala) + AMP + diphosphate. In terms of biological role, catalyzes the attachment of alanine to tRNA(Ala) in a two-step reaction: alanine is first activated by ATP to form Ala-AMP and then transferred to the acceptor end of tRNA(Ala). Also edits incorrectly charged Ser-tRNA(Ala) and Gly-tRNA(Ala) via its editing domain. The sequence is that of Alanine--tRNA ligase from Ruthia magnifica subsp. Calyptogena magnifica.